The following is a 362-amino-acid chain: Protein RecA (362 aa).

Residue 77 to 84 (GPESSGKT) participates in ATP binding.

Belongs to the RecA family.

The protein localises to the cytoplasm. In terms of biological role, can catalyze the hydrolysis of ATP in the presence of single-stranded DNA, the ATP-dependent uptake of single-stranded DNA by duplex DNA, and the ATP-dependent hybridization of homologous single-stranded DNAs. It interacts with LexA causing its activation and leading to its autocatalytic cleavage. This chain is Protein RecA, found in Allorhizobium ampelinum (strain ATCC BAA-846 / DSM 112012 / S4) (Agrobacterium vitis (strain S4)).